Consider the following 71-residue polypeptide: Translational regulator CsrA (71 aa).

Positions 50 to 71 are disordered; that stretch reads RIRHEKDGDVPEAAPGQGADPQ.

It belongs to the CsrA/RsmA family. As to quaternary structure, homodimer; the beta-strands of each monomer intercalate to form a hydrophobic core, while the alpha-helices form wings that extend away from the core.

Its subcellular location is the cytoplasm. Functionally, a key translational regulator that binds mRNA to regulate translation initiation and/or mRNA stability. Mediates global changes in gene expression, shifting from rapid growth to stress survival by linking envelope stress, the stringent response and the catabolite repression systems. Usually binds in the 5'-UTR; binding at or near the Shine-Dalgarno sequence prevents ribosome-binding, repressing translation, binding elsewhere in the 5'-UTR can activate translation and/or stabilize the mRNA. Its function is antagonized by small RNA(s). The sequence is that of Translational regulator CsrA from Halorhodospira halophila (strain DSM 244 / SL1) (Ectothiorhodospira halophila (strain DSM 244 / SL1)).